Reading from the N-terminus, the 326-residue chain is E3 ubiquitin-protein ligase SINAT3 (326 aa).

Positions Met1–Asn44 are disordered. The RING-type zinc-finger motif lies at Cys63–Arg99. The tract at residues Val113–Arg306 is SBD. An SIAH-type zinc finger spans residues Ser116–Lys176. Positions 121, 128, 140, 144, 151, 158, 170, and 175 each coordinate Zn(2+).

This sequence belongs to the SINA (Seven in absentia) family. Interacts with SINAT6. Interacts with WAV3. Interacts with FREE1. Interacts with ELC/VPS23A.

Its subcellular location is the endosome. It localises to the multivesicular body. It is found in the cytoplasmic vesicle. The protein localises to the autophagosome. It catalyses the reaction S-ubiquitinyl-[E2 ubiquitin-conjugating enzyme]-L-cysteine + [acceptor protein]-L-lysine = [E2 ubiquitin-conjugating enzyme]-L-cysteine + N(6)-ubiquitinyl-[acceptor protein]-L-lysine.. Its pathway is protein modification; protein ubiquitination. Functionally, E3 ubiquitin-protein ligase that mediates ubiquitination and subsequent proteasomal degradation of target proteins. E3 ubiquitin ligases accept ubiquitin from an E2 ubiquitin-conjugating enzyme in the form of a thioester and then directly transfers the ubiquitin to targeted substrates. It probably triggers the ubiquitin-mediated degradation of different substrates. Modulates directly the ubiquitination and proteasomal-dependent degradation of FREE1, a component of the ESCRT-I complex. Modulates directly the ubiquitination and proteasomal-dependent degradation of ELC/VPS23A, a component of the ESCRT-I complex. The chain is E3 ubiquitin-protein ligase SINAT3 from Arabidopsis thaliana (Mouse-ear cress).